The sequence spans 163 residues: Glycine cleavage system H protein, mitochondrial (163 aa).

The N-terminal 34 residues, 1–34 (MALRMWASSAANALGVSCAPKSHLLPALSLSRCF), are a transit peptide targeting the mitochondrion. The Lipoyl-binding domain occupies 56–137 (VATIGITDHA…YEEGWMVKVK (82 aa)). Lysine 96 is modified (N6-lipoyllysine).

Belongs to the GcvH family. The glycine cleavage system is composed of four proteins: P, T, L and H. (R)-lipoate serves as cofactor.

Its subcellular location is the mitochondrion. Its function is as follows. The glycine cleavage system catalyzes the degradation of glycine. The H protein shuttles the methylamine group of glycine from the P protein to the T protein. In Mesembryanthemum crystallinum (Common ice plant), this protein is Glycine cleavage system H protein, mitochondrial (GDCSH).